Reading from the N-terminus, the 363-residue chain is Aminomethyltransferase (363 aa).

Belongs to the GcvT family. As to quaternary structure, the glycine cleavage system is composed of four proteins: P, T, L and H.

It catalyses the reaction N(6)-[(R)-S(8)-aminomethyldihydrolipoyl]-L-lysyl-[protein] + (6S)-5,6,7,8-tetrahydrofolate = N(6)-[(R)-dihydrolipoyl]-L-lysyl-[protein] + (6R)-5,10-methylene-5,6,7,8-tetrahydrofolate + NH4(+). Functionally, the glycine cleavage system catalyzes the degradation of glycine. This chain is Aminomethyltransferase, found in Prosthecochloris aestuarii (strain DSM 271 / SK 413).